The following is a 657-amino-acid chain: DNA ligase (657 aa).

Residue 80-81 (SL) coordinates NAD(+). Lysine 104 (N6-AMP-lysine intermediate) is an active-site residue. Residues arginine 125, glutamate 159, and lysine 297 each contribute to the NAD(+) site. The Zn(2+) site is built by cysteine 386, cysteine 389, cysteine 406, and cysteine 411. The BRCT domain maps to 571-657 (QSEQIFENLN…EWLNNGVRPE (87 aa)).

It belongs to the NAD-dependent DNA ligase family. LigA subfamily. Mg(2+) serves as cofactor. The cofactor is Mn(2+).

It catalyses the reaction NAD(+) + (deoxyribonucleotide)n-3'-hydroxyl + 5'-phospho-(deoxyribonucleotide)m = (deoxyribonucleotide)n+m + AMP + beta-nicotinamide D-nucleotide.. Functionally, DNA ligase that catalyzes the formation of phosphodiester linkages between 5'-phosphoryl and 3'-hydroxyl groups in double-stranded DNA using NAD as a coenzyme and as the energy source for the reaction. It is essential for DNA replication and repair of damaged DNA. This chain is DNA ligase, found in Ruminiclostridium cellulolyticum (strain ATCC 35319 / DSM 5812 / JCM 6584 / H10) (Clostridium cellulolyticum).